The sequence spans 252 residues: Protein PF0476 (252 aa).

This sequence belongs to the CinA family.

In Pyrococcus furiosus (strain ATCC 43587 / DSM 3638 / JCM 8422 / Vc1), this protein is Protein PF0476.